A 401-amino-acid chain; its full sequence is Imidazolonepropionase (401 aa).

Fe(3+)-binding residues include His66 and His68. Zn(2+) contacts are provided by His66 and His68. The 4-imidazolone-5-propanoate site is built by Arg75, Tyr138, and His171. Position 138 (Tyr138) interacts with N-formimidoyl-L-glutamate. Residue His236 coordinates Fe(3+). His236 contacts Zn(2+). Gln239 lines the 4-imidazolone-5-propanoate pocket. Residue Asp311 coordinates Fe(3+). Asp311 lines the Zn(2+) pocket. N-formimidoyl-L-glutamate contacts are provided by Asn313 and Gly315. Residue Thr316 participates in 4-imidazolone-5-propanoate binding.

The protein belongs to the metallo-dependent hydrolases superfamily. HutI family. Zn(2+) is required as a cofactor. Requires Fe(3+) as cofactor.

The protein localises to the cytoplasm. It catalyses the reaction 4-imidazolone-5-propanoate + H2O = N-formimidoyl-L-glutamate. It participates in amino-acid degradation; L-histidine degradation into L-glutamate; N-formimidoyl-L-glutamate from L-histidine: step 3/3. Catalyzes the hydrolytic cleavage of the carbon-nitrogen bond in imidazolone-5-propanoate to yield N-formimidoyl-L-glutamate. It is the third step in the universal histidine degradation pathway. The protein is Imidazolonepropionase of Pseudomonas entomophila (strain L48).